We begin with the raw amino-acid sequence, 69 residues long: Putative membrane protein insertion efficiency factor (69 aa).

Belongs to the UPF0161 family.

Its subcellular location is the cell inner membrane. In terms of biological role, could be involved in insertion of integral membrane proteins into the membrane. This is Putative membrane protein insertion efficiency factor from Geobacter metallireducens (strain ATCC 53774 / DSM 7210 / GS-15).